A 550-amino-acid chain; its full sequence is CTP synthase (550 aa).

Residues 1–271 (MTRYIFITGG…DAEVLDVFGM (271 aa)) are amidoligase domain. CTP is bound at residue Ser13. Ser13 lines the UTP pocket. Residue 14–19 (SLGKGL) coordinates ATP. An L-glutamine-binding site is contributed by Tyr54. An ATP-binding site is contributed by Asp71. Residues Asp71 and Glu145 each contribute to the Mg(2+) site. CTP contacts are provided by residues 152 to 154 (DIE), 192 to 197 (KTKPTQ), and Lys228. UTP-binding positions include 192–197 (KTKPTQ) and Lys228. One can recognise a Glutamine amidotransferase type-1 domain in the interval 297–549 (TIAVVGKYTV…IAAAKEHGRL (253 aa)). Gly361 contributes to the L-glutamine binding site. The Nucleophile; for glutamine hydrolysis role is filled by Cys388. L-glutamine is bound by residues 389–392 (FGMQ), Glu412, and Arg477. Residues His522 and Glu524 contribute to the active site.

Belongs to the CTP synthase family. As to quaternary structure, homotetramer.

It catalyses the reaction UTP + L-glutamine + ATP + H2O = CTP + L-glutamate + ADP + phosphate + 2 H(+). The enzyme catalyses L-glutamine + H2O = L-glutamate + NH4(+). It carries out the reaction UTP + NH4(+) + ATP = CTP + ADP + phosphate + 2 H(+). It functions in the pathway pyrimidine metabolism; CTP biosynthesis via de novo pathway; CTP from UDP: step 2/2. With respect to regulation, allosterically activated by GTP, when glutamine is the substrate; GTP has no effect on the reaction when ammonia is the substrate. The allosteric effector GTP functions by stabilizing the protein conformation that binds the tetrahedral intermediate(s) formed during glutamine hydrolysis. Inhibited by the product CTP, via allosteric rather than competitive inhibition. Functionally, catalyzes the ATP-dependent amination of UTP to CTP with either L-glutamine or ammonia as the source of nitrogen. Regulates intracellular CTP levels through interactions with the four ribonucleotide triphosphates. The protein is CTP synthase of Caulobacter vibrioides (strain ATCC 19089 / CIP 103742 / CB 15) (Caulobacter crescentus).